The primary structure comprises 294 residues: Glycine--tRNA ligase alpha subunit (294 aa).

This sequence belongs to the class-II aminoacyl-tRNA synthetase family. As to quaternary structure, tetramer of two alpha and two beta subunits.

Its subcellular location is the cytoplasm. It catalyses the reaction tRNA(Gly) + glycine + ATP = glycyl-tRNA(Gly) + AMP + diphosphate. This is Glycine--tRNA ligase alpha subunit from Trichodesmium erythraeum (strain IMS101).